A 686-amino-acid polypeptide reads, in one-letter code: LEAF RUST 10 DISEASE-RESISTANCE LOCUS RECEPTOR-LIKE PROTEIN KINASE-like 1.3 (686 aa).

Positions 1 to 33 are cleaved as a signal peptide; sequence MFSPVLFRFSKPNSFLVLLFFLSYIHFLPCAQS. Residues 34 to 264 are Extracellular-facing; that stretch reads QREPCDTLFR…AGLSKKGKIG (231 aa). Residues Asn-76, Asn-93, Asn-175, Asn-190, and Asn-236 are each glycosylated (N-linked (GlcNAc...) asparagine). A helical transmembrane segment spans residues 265 to 285; that stretch reads IGFASGFLGATLIGGCLLCIF. At 286–686 the chain is on the cytoplasmic side; the sequence is IRRRKKLATQ…SSSNTTASSF (401 aa). Residues 358 to 633 form the Protein kinase domain; it reads ENFSKELGDG…DEIVEVLRVI (276 aa). ATP is bound by residues 364–372 and Lys-386; that span reads LGDGGFGTV. Tyr-432 carries the phosphotyrosine modification. Asp-482 serves as the catalytic Proton acceptor. Ser-515 is subject to Phosphoserine. Thr-516 and Thr-521 each carry phosphothreonine. At Tyr-529 the chain carries Phosphotyrosine. The interval 657–686 is disordered; the sequence is GLLKHGVPPPLSPETDKTTASSSNTTASSF. The segment covering 674 to 686 has biased composition (low complexity); that stretch reads TTASSSNTTASSF.

It belongs to the protein kinase superfamily. Ser/Thr protein kinase family.

It is found in the cell membrane. The catalysed reaction is L-seryl-[protein] + ATP = O-phospho-L-seryl-[protein] + ADP + H(+). It catalyses the reaction L-threonyl-[protein] + ATP = O-phospho-L-threonyl-[protein] + ADP + H(+). In Arabidopsis thaliana (Mouse-ear cress), this protein is LEAF RUST 10 DISEASE-RESISTANCE LOCUS RECEPTOR-LIKE PROTEIN KINASE-like 1.3.